The primary structure comprises 444 residues: Tol-Pal system protein TolB (444 aa).

Positions 1–31 are cleaved as a signal peptide; sequence MSFDLNRRQLMISAATAAGALALGPARDAFG.

The protein belongs to the TolB family. As to quaternary structure, the Tol-Pal system is composed of five core proteins: the inner membrane proteins TolA, TolQ and TolR, the periplasmic protein TolB and the outer membrane protein Pal. They form a network linking the inner and outer membranes and the peptidoglycan layer.

It is found in the periplasm. Its function is as follows. Part of the Tol-Pal system, which plays a role in outer membrane invagination during cell division and is important for maintaining outer membrane integrity. The polypeptide is Tol-Pal system protein TolB (Rhodopseudomonas palustris (strain ATCC BAA-98 / CGA009)).